Reading from the N-terminus, the 150-residue chain is MDSTGRNLVYFSSVSENTHRFVQKLGIPAIRIPLHGRIEVDHPYVLLLPTYGGGRATPDLNAGGYVPKQVIAFLNNEHNRSLIRGVIAAGNNNFGAEFAYAGNVVSRKCGVPYLYRFELMGTQDDVDAVRAGLAEFWKEQTCHQPSLQSL.

This sequence belongs to the NrdI family.

Functionally, probably involved in ribonucleotide reductase function. The polypeptide is Protein NrdI (Mycobacterium avium (strain 104)).